The chain runs to 117 residues: Large ribosomal subunit protein bL20 (117 aa).

Belongs to the bacterial ribosomal protein bL20 family.

Functionally, binds directly to 23S ribosomal RNA and is necessary for the in vitro assembly process of the 50S ribosomal subunit. It is not involved in the protein synthesizing functions of that subunit. This chain is Large ribosomal subunit protein bL20, found in Trichlorobacter lovleyi (strain ATCC BAA-1151 / DSM 17278 / SZ) (Geobacter lovleyi).